The following is a 316-amino-acid chain: Formimidoylglutamase (316 aa).

His127, Asp156, His158, Asp160, Asp247, and Asp249 together coordinate Mn(2+).

Belongs to the arginase family. The cofactor is Mn(2+).

The catalysed reaction is N-formimidoyl-L-glutamate + H2O = formamide + L-glutamate. Its pathway is amino-acid degradation; L-histidine degradation into L-glutamate; L-glutamate from N-formimidoyl-L-glutamate (hydrolase route): step 1/1. Functionally, catalyzes the conversion of N-formimidoyl-L-glutamate to L-glutamate and formamide. The chain is Formimidoylglutamase from Cupriavidus pinatubonensis (strain JMP 134 / LMG 1197) (Cupriavidus necator (strain JMP 134)).